The primary structure comprises 306 residues: Mycothiol acetyltransferase (306 aa).

2 N-acetyltransferase domains span residues 17–163 (VARV…RPMP) and 166–306 (LALS…YRRA). Residue glutamate 48 coordinates 1D-myo-inositol 2-(L-cysteinylamino)-2-deoxy-alpha-D-glucopyranoside. Position 89-91 (89-91 (IVV)) interacts with acetyl-CoA. 1D-myo-inositol 2-(L-cysteinylamino)-2-deoxy-alpha-D-glucopyranoside-binding residues include glutamate 192, lysine 232, and glutamate 239. Acetyl-CoA contacts are provided by residues 243–245 (LGV) and 250–256 (AARGLGS). Tyrosine 277 contacts 1D-myo-inositol 2-(L-cysteinylamino)-2-deoxy-alpha-D-glucopyranoside.

It belongs to the acetyltransferase family. MshD subfamily. As to quaternary structure, monomer.

The catalysed reaction is 1D-myo-inositol 2-(L-cysteinylamino)-2-deoxy-alpha-D-glucopyranoside + acetyl-CoA = mycothiol + CoA + H(+). Its function is as follows. Catalyzes the transfer of acetyl from acetyl-CoA to desacetylmycothiol (Cys-GlcN-Ins) to form mycothiol. The chain is Mycothiol acetyltransferase from Clavibacter michiganensis subsp. michiganensis (strain NCPPB 382).